The primary structure comprises 255 residues: Superoxide dismutase [Fe] 2, chloroplastic (255 aa).

Residues 1-32 (MAAFASALRVLPSPPAAVPRRLRSREQRQGCR) constitute a chloroplast transit peptide. Histidine 67, histidine 119, aspartate 203, and histidine 207 together coordinate Fe cation.

This sequence belongs to the iron/manganese superoxide dismutase family. In terms of assembly, homodimer. The cofactor is Fe cation. As to expression, strongly expressed in the stems of the young seedlings, etiolated seedlings and embryogenic calli, but only minimally expressed in the leaves and the roots.

Its subcellular location is the plastid. The protein resides in the chloroplast. It catalyses the reaction 2 superoxide + 2 H(+) = H2O2 + O2. Functionally, destroys superoxide anion radicals which are normally produced within the cells and which are toxic to biological systems. This Oryza sativa subsp. japonica (Rice) protein is Superoxide dismutase [Fe] 2, chloroplastic.